Reading from the N-terminus, the 237-residue chain is Redox-sensing transcriptional repressor Rex (237 aa).

Residues 45-84 constitute a DNA-binding region (H-T-H motif); that stretch reads LYYRELHRLLAAGESSTNSRDLGAMVNVSPAVVRRDLSSI. 119 to 124 is a binding site for NAD(+); sequence GVGSLG.

Belongs to the transcriptional regulatory Rex family. As to quaternary structure, homodimer.

It is found in the cytoplasm. In terms of biological role, modulates transcription in response to changes in cellular NADH/NAD(+) redox state. This chain is Redox-sensing transcriptional repressor Rex, found in Rhodopirellula baltica (strain DSM 10527 / NCIMB 13988 / SH1).